Consider the following 626-residue polypeptide: MGFIAEGNTLAWEDSVKYLEYIREHGVIQLLNIIKNNKDKVTEDFKWGDEVEYILINNDNYKLKLRANEILDLLMLEEKRNPTTVEHLWRPEYGRFMIEGTPGSPYIGLGKQLLSIQSNLKSRRENVEKYLKPNESILTITSYPRMGCKNFTDPQGEVKGPIAESKFLPDTVINPHFRFSTLTANIRKRRGGTVSINIPMYRDKNTPEYLDQICTYEKVPPILDDSDNSQTNISSPSNQPFNIYMDAMGFGMGCCCLQTTFQLPNIDDARTVYDQLAPISPLMLSLTAASSIFKGYLSDIDARWTIISQSVDDRNKEELGKAPLNNNKFVINKSRYDSIDSYIGSKSKSFRSEYNDLDLVYDKDVYQKLIENGVDSLLSKHFAHLFIRDPLVIYSDKIEIDDEKNTDHFENIQSTNWQTVRFKPPPPSSSIGWRVELRPMEVQLTDFQNSAFVVFSAILVKAIQDLKLNFYIPITKVDENLKTAHKRASVINDKFYFRKNIYNNTPNGSIENEYELMTINEIFNGKGGDNKGLIGVIRDYISTLDFDNETTELVNKYIKFISKRASGEIKSISTWTREFVQNHPAYNHDSIVNDEIQADYLQRCLDISNGTIYDSSIQGDKDDYYC.

This sequence belongs to the glutamate--cysteine ligase type 3 family. Monomer.

It carries out the reaction L-cysteine + L-glutamate + ATP = gamma-L-glutamyl-L-cysteine + ADP + phosphate + H(+). It participates in sulfur metabolism; glutathione biosynthesis; glutathione from L-cysteine and L-glutamate: step 1/2. Functionally, an essential enzyme in glutathione (L-gamma-glutamyl-L-cysteinylglycine, GSH) biosynthesis, GSH is essential for growth and differentiation to prespore stage. Catalyzes the condensation of glutamate to cysteine. This chain is Glutamate--cysteine ligase (gcsA), found in Dictyostelium discoideum (Social amoeba).